Here is a 191-residue protein sequence, read N- to C-terminus: Elongation factor P (191 aa).

Lysine 34 bears the N6-(3,6-diaminohexanoyl)-5-hydroxylysine mark.

This sequence belongs to the elongation factor P family. Post-translationally, may be beta-lysylated on the epsilon-amino group of Lys-34 by the combined action of EpmA and EpmB, and then hydroxylated on the C5 position of the same residue by EpmC (if this protein is present). Lysylation is critical for the stimulatory effect of EF-P on peptide-bond formation. The lysylation moiety may extend toward the peptidyltransferase center and stabilize the terminal 3-CCA end of the tRNA. Hydroxylation of the C5 position on Lys-34 may allow additional potential stabilizing hydrogen-bond interactions with the P-tRNA.

The protein localises to the cytoplasm. Its pathway is protein biosynthesis; polypeptide chain elongation. In terms of biological role, involved in peptide bond synthesis. Alleviates ribosome stalling that occurs when 3 or more consecutive Pro residues or the sequence PPG is present in a protein, possibly by augmenting the peptidyl transferase activity of the ribosome. Modification of Lys-34 is required for alleviation. The protein is Elongation factor P of Psychrobacter sp. (strain PRwf-1).